A 965-amino-acid polypeptide reads, in one-letter code: Villin-3 (965 aa).

6 Gelsolin-like repeats span residues 27 to 79, 150 to 190, 262 to 304, 401 to 452, 533 to 573, and 635 to 676; these read ENFE…DEAG, VHLK…QERA, GQVE…EERK, ANSK…EDQE, NKAL…EQQE, and FQVE…KEKQ. 2 stretches are compositionally biased toward low complexity: residues 769 to 780 and 808 to 828; these read AFNSSSGRTSSP and SSPS…ASQR. Disordered stretches follow at residues 769–828 and 840–906; these read AFNS…ASQR and TAEK…GVTF. A compositionally biased stretch (acidic residues) spans 865–879; the sequence is EATEEATEAKEEEEV. Position 880 is a phosphoserine (serine 880). One can recognise an HP domain in the interval 900–965; that stretch reads ETTGVTFTYE…DLLKKKFNLF (66 aa).

The protein belongs to the villin/gelsolin family. As to expression, expressed in all tissues examined, including root hairs.

The protein resides in the cytoplasm. Its subcellular location is the cytoskeleton. Functionally, binds actin and actin filament bundles in a Ca(2+)-insensitive manner, but severs actin filaments in a calcium-dependent manner, regardless of the presence or not of VLN1 (AC O81643). Acts redundantly with VLN2 (AC O81644) to generate thick actin filament bundles, to regulate directional organ growth and in sclerenchyma development. The polypeptide is Villin-3 (Arabidopsis thaliana (Mouse-ear cress)).